The sequence spans 177 residues: Inner membrane protein p22 (177 aa).

Residues Met1–Thr7 lie on the Intravirion side of the membrane. Residues Ile8–Tyr28 traverse the membrane as a helical segment. Topologically, residues Tyr29 to Ala177 are virion surface.

The protein belongs to the asfivirus inner membrane protein p22 family.

It localises to the virion membrane. Its subcellular location is the host cell membrane. This chain is Inner membrane protein p22, found in African swine fever virus (isolate Warthog/Namibia/Wart80/1980) (ASFV).